A 322-amino-acid polypeptide reads, in one-letter code: Lipoyl synthase (322 aa).

Residues 1-25 (MSQRITIDHRSAPALRHPEKAHRPD) are compositionally biased toward basic and acidic residues. The disordered stretch occupies residues 1-29 (MSQRITIDHRSAPALRHPEKAHRPDNPIQ). Residues cysteine 61, cysteine 66, cysteine 72, cysteine 87, cysteine 91, cysteine 94, and serine 300 each coordinate [4Fe-4S] cluster. In terms of domain architecture, Radical SAM core spans 73-289 (WSQRHATMMI…AAAARSKGFL (217 aa)).

This sequence belongs to the radical SAM superfamily. Lipoyl synthase family. [4Fe-4S] cluster is required as a cofactor.

It is found in the cytoplasm. The enzyme catalyses [[Fe-S] cluster scaffold protein carrying a second [4Fe-4S](2+) cluster] + N(6)-octanoyl-L-lysyl-[protein] + 2 oxidized [2Fe-2S]-[ferredoxin] + 2 S-adenosyl-L-methionine + 4 H(+) = [[Fe-S] cluster scaffold protein] + N(6)-[(R)-dihydrolipoyl]-L-lysyl-[protein] + 4 Fe(3+) + 2 hydrogen sulfide + 2 5'-deoxyadenosine + 2 L-methionine + 2 reduced [2Fe-2S]-[ferredoxin]. It participates in protein modification; protein lipoylation via endogenous pathway; protein N(6)-(lipoyl)lysine from octanoyl-[acyl-carrier-protein]: step 2/2. In terms of biological role, catalyzes the radical-mediated insertion of two sulfur atoms into the C-6 and C-8 positions of the octanoyl moiety bound to the lipoyl domains of lipoate-dependent enzymes, thereby converting the octanoylated domains into lipoylated derivatives. The protein is Lipoyl synthase of Gluconobacter oxydans (strain 621H) (Gluconobacter suboxydans).